A 206-amino-acid chain; its full sequence is FMN-dependent NADH:quinone oxidoreductase (206 aa).

FMN contacts are provided by residues 15–17 (SVS), 94–97 (MYNF), and 138–141 (TRGG).

It belongs to the azoreductase type 1 family. Homodimer. It depends on FMN as a cofactor.

The enzyme catalyses 2 a quinone + NADH + H(+) = 2 a 1,4-benzosemiquinone + NAD(+). It carries out the reaction N,N-dimethyl-1,4-phenylenediamine + anthranilate + 2 NAD(+) = 2-(4-dimethylaminophenyl)diazenylbenzoate + 2 NADH + 2 H(+). Its function is as follows. Quinone reductase that provides resistance to thiol-specific stress caused by electrophilic quinones. Also exhibits azoreductase activity. Catalyzes the reductive cleavage of the azo bond in aromatic azo compounds to the corresponding amines. This is FMN-dependent NADH:quinone oxidoreductase from Sinorhizobium medicae (strain WSM419) (Ensifer medicae).